We begin with the raw amino-acid sequence, 198 residues long: MYVRIVQDLIRELGKLPGIGPKSAQRIAFFILQNPSFDIDRLSETLQSVRKQVQFCKVCGNFSEEDECVICSDPRRDRGVICVVEEPKDVVAIEKTREFSGLYHVLGGAISPIDGVGPDDLNIRQLLQRLADGTITEVVLATDPNMEGEATASYIARVISAMRIRVSKLASGLPVGSDLEYADEITLGRALEGRQYIN.

Residues 56–71 form a C4-type zinc finger; the sequence is CKVCGNFSEEDECVIC. Positions 79 to 174 constitute a Toprim domain; the sequence is GVICVVEEPK…RVSKLASGLP (96 aa).

It belongs to the RecR family.

Its function is as follows. May play a role in DNA repair. It seems to be involved in an RecBC-independent recombinational process of DNA repair. It may act with RecF and RecO. The chain is Recombination protein RecR from Tropheryma whipplei (strain TW08/27) (Whipple's bacillus).